Here is a 218-residue protein sequence, read N- to C-terminus: Small ribosomal subunit protein uS3 (218 aa).

The region spanning 38–106 (LRNDLKKKLM…PVHLNIEEVK (69 aa)) is the KH type-2 domain.

The protein belongs to the universal ribosomal protein uS3 family. In terms of assembly, part of the 30S ribosomal subunit. Forms a tight complex with proteins S10 and S14.

Functionally, binds the lower part of the 30S subunit head. Binds mRNA in the 70S ribosome, positioning it for translation. This is Small ribosomal subunit protein uS3 from Legionella pneumophila (strain Paris).